A 207-amino-acid chain; its full sequence is Cytochrome c biogenesis ATP-binding export protein CcmA (207 aa).

In terms of domain architecture, ABC transporter spans 4 to 207; the sequence is LEARELLCER…RISLTQTGAA (204 aa). Residue 36-43 participates in ATP binding; it reads GSNGAGKT.

The protein belongs to the ABC transporter superfamily. CcmA exporter (TC 3.A.1.107) family. In terms of assembly, the complex is composed of two ATP-binding proteins (CcmA) and two transmembrane proteins (CcmB).

Its subcellular location is the cell inner membrane. The catalysed reaction is heme b(in) + ATP + H2O = heme b(out) + ADP + phosphate + H(+). Functionally, part of the ABC transporter complex CcmAB involved in the biogenesis of c-type cytochromes; once thought to export heme, this seems not to be the case, but its exact role is uncertain. Responsible for energy coupling to the transport system. This chain is Cytochrome c biogenesis ATP-binding export protein CcmA, found in Escherichia coli O6:H1 (strain CFT073 / ATCC 700928 / UPEC).